The sequence spans 63 residues: Large ribosomal subunit protein uL30 (63 aa).

Belongs to the universal ribosomal protein uL30 family. As to quaternary structure, part of the 50S ribosomal subunit.

This is Large ribosomal subunit protein uL30 from Rickettsia massiliae (strain Mtu5).